Reading from the N-terminus, the 452-residue chain is Pup--protein ligase (452 aa).

E9 is a Mg(2+) binding site. An ATP-binding site is contributed by R53. Position 55 (Y55) interacts with Mg(2+). D57 acts as the Proton acceptor in catalysis. Residue E63 participates in Mg(2+) binding. ATP contacts are provided by T66 and W419.

The protein belongs to the Pup ligase/Pup deamidase family. Pup-conjugating enzyme subfamily.

The enzyme catalyses ATP + [prokaryotic ubiquitin-like protein]-L-glutamate + [protein]-L-lysine = ADP + phosphate + N(6)-([prokaryotic ubiquitin-like protein]-gamma-L-glutamyl)-[protein]-L-lysine.. It participates in protein degradation; proteasomal Pup-dependent pathway. The protein operates within protein modification; protein pupylation. Functionally, catalyzes the covalent attachment of the prokaryotic ubiquitin-like protein modifier Pup to the proteasomal substrate proteins, thereby targeting them for proteasomal degradation. This tagging system is termed pupylation. The ligation reaction involves the side-chain carboxylate of the C-terminal glutamate of Pup and the side-chain amino group of a substrate lysine. This Streptosporangium roseum (strain ATCC 12428 / DSM 43021 / JCM 3005 / KCTC 9067 / NCIMB 10171 / NRRL 2505 / NI 9100) protein is Pup--protein ligase.